The chain runs to 89 residues: Small ribosomal subunit protein uS15 (89 aa).

Belongs to the universal ribosomal protein uS15 family. As to quaternary structure, part of the 30S ribosomal subunit. Forms a bridge to the 50S subunit in the 70S ribosome, contacting the 23S rRNA.

Functionally, one of the primary rRNA binding proteins, it binds directly to 16S rRNA where it helps nucleate assembly of the platform of the 30S subunit by binding and bridging several RNA helices of the 16S rRNA. Its function is as follows. Forms an intersubunit bridge (bridge B4) with the 23S rRNA of the 50S subunit in the ribosome. This chain is Small ribosomal subunit protein uS15, found in Lactobacillus delbrueckii subsp. bulgaricus (strain ATCC 11842 / DSM 20081 / BCRC 10696 / JCM 1002 / NBRC 13953 / NCIMB 11778 / NCTC 12712 / WDCM 00102 / Lb 14).